We begin with the raw amino-acid sequence, 341 residues long: DNA repair protein XRCC3 (341 aa).

M1 bears the N-acetylmethionine mark. 107 to 114 is an ATP binding site; the sequence is GRSSAGKT.

It belongs to the RecA family. RAD51 subfamily. Interacts with RAD51C and RAD51. Part of the CX3 complex consisting of RAD51C and XRCC3; the complex has a ring-like structure arranged into a flat disc around a central channel; CX3 can interact with RAD51 in vitro. Forms a complex with FANCD2, BRCA2 and phosphorylated FANCG. Interacts with SWSAP1 and ZSWIM7; involved in homologous recombination repair. Interacts directly with PALB2 which may serve as a scaffold for a HR complex containing PALB2, BRCA2, RAD51C, RAD51 and XRCC3.

Its subcellular location is the nucleus. The protein localises to the cytoplasm. It localises to the perinuclear region. The protein resides in the mitochondrion matrix. Involved in the homologous recombination repair (HRR) pathway of double-stranded DNA, thought to repair chromosomal fragmentation, translocations and deletions. Part of the RAD21 paralog protein complex CX3 which acts in the BRCA1-BRCA2-dependent HR pathway. Upon DNA damage, CX3 acts downstream of RAD51 recruitment; the complex binds predominantly to the intersection of the four duplex arms of the Holliday junction (HJ) and to junctions of replication forks. Involved in HJ resolution and thus in processing HR intermediates late in the DNA repair process; the function may be linked to the CX3 complex and seems to involve GEN1 during mitotic cell cycle progression. Part of a PALB2-scaffolded HR complex containing BRCA2 and RAD51C and which is thought to play a role in DNA repair by HR. Plays a role in regulating mitochondrial DNA copy number under conditions of oxidative stress in the presence of RAD51 and RAD51C. This chain is DNA repair protein XRCC3 (XRCC3), found in Bos taurus (Bovine).